A 245-amino-acid chain; its full sequence is Pyridoxine 5'-phosphate synthase (245 aa).

Asn-9 provides a ligand contact to 3-amino-2-oxopropyl phosphate. Asp-11 to His-12 serves as a coordination point for 1-deoxy-D-xylulose 5-phosphate. Arg-20 serves as a coordination point for 3-amino-2-oxopropyl phosphate. The active-site Proton acceptor is His-45. 1-deoxy-D-xylulose 5-phosphate is bound by residues Arg-47 and His-52. The Proton acceptor role is filled by Glu-72. A 1-deoxy-D-xylulose 5-phosphate-binding site is contributed by Thr-102. The active-site Proton donor is the His-193. 3-amino-2-oxopropyl phosphate contacts are provided by residues Gly-194 and Gly-215–His-216.

The protein belongs to the PNP synthase family. In terms of assembly, homooctamer; tetramer of dimers.

The protein localises to the cytoplasm. The enzyme catalyses 3-amino-2-oxopropyl phosphate + 1-deoxy-D-xylulose 5-phosphate = pyridoxine 5'-phosphate + phosphate + 2 H2O + H(+). It participates in cofactor biosynthesis; pyridoxine 5'-phosphate biosynthesis; pyridoxine 5'-phosphate from D-erythrose 4-phosphate: step 5/5. Catalyzes the complicated ring closure reaction between the two acyclic compounds 1-deoxy-D-xylulose-5-phosphate (DXP) and 3-amino-2-oxopropyl phosphate (1-amino-acetone-3-phosphate or AAP) to form pyridoxine 5'-phosphate (PNP) and inorganic phosphate. The polypeptide is Pyridoxine 5'-phosphate synthase (Shewanella oneidensis (strain ATCC 700550 / JCM 31522 / CIP 106686 / LMG 19005 / NCIMB 14063 / MR-1)).